We begin with the raw amino-acid sequence, 94 residues long: Progonadoliberin-3 (94 aa).

The signal sequence occupies residues 1–23 (MEWKGRVLVQLLMLVCVLEVSLC). Glutamine 24 is modified (pyrrolidone carboxylic acid). Glycine 33 is subject to Glycine amide.

The protein belongs to the GnRH family.

It localises to the secreted. Its function is as follows. Stimulates the secretion of gonadotropins. The chain is Progonadoliberin-3 (gnrh3) from Rutilus rutilus (Roach).